The chain runs to 153 residues: Holo-[acyl-carrier-protein] synthase (153 aa).

Asp24 and Glu78 together coordinate Mg(2+).

It belongs to the P-Pant transferase superfamily. AcpS family. Mg(2+) is required as a cofactor.

The protein localises to the cytoplasm. It carries out the reaction apo-[ACP] + CoA = holo-[ACP] + adenosine 3',5'-bisphosphate + H(+). In terms of biological role, transfers the 4'-phosphopantetheine moiety from coenzyme A to a Ser of acyl-carrier-protein. The chain is Holo-[acyl-carrier-protein] synthase from Bordetella parapertussis (strain 12822 / ATCC BAA-587 / NCTC 13253).